A 484-amino-acid chain; its full sequence is Probable glycine dehydrogenase (decarboxylating) subunit 2 (484 aa).

Lys-264 bears the N6-(pyridoxal phosphate)lysine mark.

The protein belongs to the GcvP family. C-terminal subunit subfamily. As to quaternary structure, the glycine cleavage system is composed of four proteins: P, T, L and H. In this organism, the P 'protein' is a heterodimer of two subunits. Requires pyridoxal 5'-phosphate as cofactor.

It catalyses the reaction N(6)-[(R)-lipoyl]-L-lysyl-[glycine-cleavage complex H protein] + glycine + H(+) = N(6)-[(R)-S(8)-aminomethyldihydrolipoyl]-L-lysyl-[glycine-cleavage complex H protein] + CO2. Functionally, the glycine cleavage system catalyzes the degradation of glycine. The P protein binds the alpha-amino group of glycine through its pyridoxal phosphate cofactor; CO(2) is released and the remaining methylamine moiety is then transferred to the lipoamide cofactor of the H protein. The sequence is that of Probable glycine dehydrogenase (decarboxylating) subunit 2 from Legionella pneumophila (strain Corby).